The primary structure comprises 446 residues: Tubulin gamma chain (446 aa).

GTP is bound at residue 142-148; sequence AGGTGSG.

Belongs to the tubulin family. Interacts with mto1. Interacts with mto2.

The protein localises to the cytoplasm. It is found in the cytoskeleton. The protein resides in the microtubule organizing center. It localises to the spindle pole body. In terms of biological role, tubulin is the major constituent of microtubules. The gamma chain is found at microtubule organizing centers (MTOC) such as the spindle poles or the centrosome, suggesting that it is involved in the minus-end nucleation of microtubule assembly. The chain is Tubulin gamma chain from Schizosaccharomyces pombe (strain 972 / ATCC 24843) (Fission yeast).